Reading from the N-terminus, the 227-residue chain is PKHD-type hydroxylase Bamb_4479 (227 aa).

The Fe2OG dioxygenase domain occupies 80 to 179 (QVYPPLFNRY…RVASFFWVQS (100 aa)). 3 residues coordinate Fe cation: His98, Asp100, and His160. Position 170 (Arg170) interacts with 2-oxoglutarate.

It depends on Fe(2+) as a cofactor. L-ascorbate serves as cofactor.

The polypeptide is PKHD-type hydroxylase Bamb_4479 (Burkholderia ambifaria (strain ATCC BAA-244 / DSM 16087 / CCUG 44356 / LMG 19182 / AMMD) (Burkholderia cepacia (strain AMMD))).